The chain runs to 145 residues: Large ribosomal subunit protein uL15 (145 aa).

The disordered stretch occupies residues 1 to 50 (MLHTIKPVTNARKSTKRLGRGPGSGTGKTSGKGHKGQLARSGKTLRPGFE). Over residues 20–30 (RGPGSGTGKTS) the composition is skewed to gly residues.

The protein belongs to the universal ribosomal protein uL15 family. Part of the 50S ribosomal subunit.

Binds to the 23S rRNA. In Aster yellows witches'-broom phytoplasma (strain AYWB), this protein is Large ribosomal subunit protein uL15.